A 62-amino-acid polypeptide reads, in one-letter code: Photosystem II reaction center protein Z (62 aa).

The next 2 membrane-spanning stretches (helical) occupy residues 8–28 (AVFA…VVFA) and 41–61 (FSGT…NSLI).

The protein belongs to the PsbZ family. As to quaternary structure, PSII is composed of 1 copy each of membrane proteins PsbA, PsbB, PsbC, PsbD, PsbE, PsbF, PsbH, PsbI, PsbJ, PsbK, PsbL, PsbM, PsbT, PsbY, PsbZ, Psb30/Ycf12, at least 3 peripheral proteins of the oxygen-evolving complex and a large number of cofactors. It forms dimeric complexes.

The protein localises to the plastid. It localises to the chloroplast thylakoid membrane. Its function is as follows. May control the interaction of photosystem II (PSII) cores with the light-harvesting antenna, regulates electron flow through the 2 photosystem reaction centers. PSII is a light-driven water plastoquinone oxidoreductase, using light energy to abstract electrons from H(2)O, generating a proton gradient subsequently used for ATP formation. In Amborella trichopoda, this protein is Photosystem II reaction center protein Z.